A 639-amino-acid polypeptide reads, in one-letter code: Tetracycline resistance protein TetM from transposon Tn5251 (639 aa).

Residues 1-242 (MKIINIGVLA…VITNKFYSST (242 aa)) form the tr-type G domain. GTP contacts are provided by residues 10-17 (AHVDAGKT), 74-78 (DTPGH), and 128-131 (NKID).

Belongs to the TRAFAC class translation factor GTPase superfamily. Classic translation factor GTPase family. TetM/TetO subfamily.

Functionally, abolishes the inhibitory effect of tetracyclin on protein synthesis by a non-covalent modification of the ribosomes. The chain is Tetracycline resistance protein TetM from transposon Tn5251 (tetM(5251)) from Streptococcus pneumoniae.